Reading from the N-terminus, the 533-residue chain is uncharacterized protein (533 aa).

The next 5 helical transmembrane spans lie at 4-23 (FLAA…GLAI), 28-47 (VFGL…VVST), 57-79 (IVYQ…PAFF), 86-108 (GWKL…WVLI), and 151-173 (VIGY…AVGA). Positions 263–347 (LGEERETKIE…VAEVRRFLGD (85 aa)) constitute an RCK C-terminal domain. 4 helical membrane passes run 352-374 (LADV…GAIP), 379-401 (GGTT…LGAL), 422-444 (LGLA…AALT), and 454-476 (GGLV…VLRL).

It belongs to the AAE transporter (TC 2.A.81) family.

The protein resides in the cell membrane. This is an uncharacterized protein from Corynebacterium glutamicum (strain ATCC 13032 / DSM 20300 / JCM 1318 / BCRC 11384 / CCUG 27702 / LMG 3730 / NBRC 12168 / NCIMB 10025 / NRRL B-2784 / 534).